The following is a 575-amino-acid chain: Glutathione hydrolase proenzyme (575 aa).

The signal sequence occupies residues 1–24 (MKNQTFSKALLATALSCALFNVHA). An L-glutamate-binding site is contributed by arginine 100. Threonine 376 acts as the Nucleophile in catalysis. L-glutamate is bound by residues threonine 394, asparagine 396, glutamate 415, aspartate 418, 447–448 (SS), and 468–469 (GG).

It belongs to the gamma-glutamyltransferase family. This enzyme consists of two polypeptide chains, which are synthesized in precursor form from a single polypeptide. In terms of processing, cleaved by autocatalysis into a large and a small subunit.

It is found in the periplasm. It catalyses the reaction an N-terminal (5-L-glutamyl)-[peptide] + an alpha-amino acid = 5-L-glutamyl amino acid + an N-terminal L-alpha-aminoacyl-[peptide]. The enzyme catalyses glutathione + H2O = L-cysteinylglycine + L-glutamate. The catalysed reaction is an S-substituted glutathione + H2O = an S-substituted L-cysteinylglycine + L-glutamate. Its pathway is sulfur metabolism; glutathione metabolism. The chain is Glutathione hydrolase proenzyme (ggt) from Pseudomonas sp. (strain A14).